The chain runs to 81 residues: Defensin-like protein 130 (81 aa).

The signal sequence occupies residues 1–21 (MTKNTSLTIFMVVLVIGMLYT). Cystine bridges form between C32–C81, C41–C63, C46–C75, and C50–C77.

It belongs to the DEFL family.

The protein localises to the secreted. The polypeptide is Defensin-like protein 130 (LCR28) (Arabidopsis thaliana (Mouse-ear cress)).